The sequence spans 561 residues: Dihydroxy-acid dehydratase (561 aa).

Cys-51 lines the [2Fe-2S] cluster pocket. Asp-83 contributes to the Mg(2+) binding site. Residue Cys-124 participates in [2Fe-2S] cluster binding. Residues Asp-125 and Lys-126 each coordinate Mg(2+). Lys-126 carries the post-translational modification N6-carboxylysine. Cys-196 provides a ligand contact to [2Fe-2S] cluster. A Mg(2+)-binding site is contributed by Glu-447. The active-site Proton acceptor is Ser-473.

Belongs to the IlvD/Edd family. Homodimer. The cofactor is [2Fe-2S] cluster. Requires Mg(2+) as cofactor.

The catalysed reaction is (2R)-2,3-dihydroxy-3-methylbutanoate = 3-methyl-2-oxobutanoate + H2O. It carries out the reaction (2R,3R)-2,3-dihydroxy-3-methylpentanoate = (S)-3-methyl-2-oxopentanoate + H2O. The protein operates within amino-acid biosynthesis; L-isoleucine biosynthesis; L-isoleucine from 2-oxobutanoate: step 3/4. It participates in amino-acid biosynthesis; L-valine biosynthesis; L-valine from pyruvate: step 3/4. Functions in the biosynthesis of branched-chain amino acids. Catalyzes the dehydration of (2R,3R)-2,3-dihydroxy-3-methylpentanoate (2,3-dihydroxy-3-methylvalerate) into 2-oxo-3-methylpentanoate (2-oxo-3-methylvalerate) and of (2R)-2,3-dihydroxy-3-methylbutanoate (2,3-dihydroxyisovalerate) into 2-oxo-3-methylbutanoate (2-oxoisovalerate), the penultimate precursor to L-isoleucine and L-valine, respectively. The protein is Dihydroxy-acid dehydratase of Oceanobacillus iheyensis (strain DSM 14371 / CIP 107618 / JCM 11309 / KCTC 3954 / HTE831).